Here is a 118-residue protein sequence, read N- to C-terminus: Waprin-Enh1 (118 aa).

A signal peptide spans 1–24; sequence MKTLTGLLLVGLLALWIGLPSTSS. WAP domains follow at residues 25–72 and 74–118; these read KILF…RSCR and PPVL…RICK. 8 disulfide bridges follow: Cys-30–Cys-63, Cys-40–Cys-67, Cys-50–Cys-62, Cys-56–Cys-71, Cys-81–Cys-109, Cys-88–Cys-113, Cys-96–Cys-108, and Cys-102–Cys-117.

The protein belongs to the venom waprin family. In terms of tissue distribution, expressed by the venom gland.

Its subcellular location is the secreted. Functionally, damages membranes of susceptible bacteria. Has no hemolytic activity. Not toxic to mice. Does not inhibit the proteinases elastase and cathepsin G. This chain is Waprin-Enh1, found in Pseudoferania polylepis (Macleay's water snake).